The following is a 424-amino-acid chain: GTPase Obg (424 aa).

An Obg domain is found at Met-1 to Leu-158. The OBG-type G domain maps to Ala-159–Pro-329. Residues Gly-165–Ser-172, Phe-190–Val-194, Asp-212–Gly-215, Asn-282–Asp-285, and Ser-310–Ala-312 contribute to the GTP site. Ser-172 and Thr-192 together coordinate Mg(2+). One can recognise an OCT domain in the interval Thr-347–Glu-424.

The protein belongs to the TRAFAC class OBG-HflX-like GTPase superfamily. OBG GTPase family. In terms of assembly, monomer. It depends on Mg(2+) as a cofactor.

The protein resides in the cytoplasm. Its function is as follows. An essential GTPase which binds GTP, GDP and possibly (p)ppGpp with moderate affinity, with high nucleotide exchange rates and a fairly low GTP hydrolysis rate. Plays a role in control of the cell cycle, stress response, ribosome biogenesis and in those bacteria that undergo differentiation, in morphogenesis control. The protein is GTPase Obg of Desulfitobacterium hafniense (strain Y51).